We begin with the raw amino-acid sequence, 570 residues long: Probable D-xylulose kinase A (570 aa).

3 residues coordinate substrate: histidine 98, aspartate 279, and asparagine 280. ATP contacts are provided by residues tryptophan 363, 470 to 471, and asparagine 474; that span reads GG.

Belongs to the FGGY kinase family.

It is found in the cytoplasm. The catalysed reaction is D-xylulose + ATP = D-xylulose 5-phosphate + ADP + H(+). Functionally, highly specific D-xylulose kinase which participates in the catabolism of xylose. Xylose is a major component of hemicelluloses such as xylan. Most fungi utilize D-xylose via three enzymatic reactions, xylose reductase (XR), xylitol dehydrogenase (XDH), and xylulokinase, to form xylulose 5-phosphate, which enters pentose phosphate pathway. This Arthroderma otae (strain ATCC MYA-4605 / CBS 113480) (Microsporum canis) protein is Probable D-xylulose kinase A (xkiA).